We begin with the raw amino-acid sequence, 117 residues long: Glycine cleavage system H-like protein (117 aa).

Residues 21–103 (IVRLGLSSRM…ESEGWFVVLQ (83 aa)) form the Lipoyl-binding domain. N6-lipoyllysine is present on lysine 62.

It belongs to the GcvH family. It depends on (R)-lipoate as a cofactor.

This is Glycine cleavage system H-like protein from Chlamydia muridarum (strain MoPn / Nigg).